The following is a 204-amino-acid chain: Proteasome subunit beta type-3-A (204 aa).

The protein belongs to the peptidase T1B family. Component of the 20S core complex of the 26S proteasome. The 26S proteasome is composed of a core protease (CP), known as the 20S proteasome, capped at one or both ends by the 19S regulatory particle (RP/PA700). The 20S proteasome core is composed of 28 subunits that are arranged in four stacked rings, resulting in a barrel-shaped structure. The two end rings are each formed by seven alpha subunits, and the two central rings are each formed by seven beta subunits. The catalytic chamber with the active sites is on the inside of the barrel.

It is found in the cytoplasm. Its subcellular location is the nucleus. In terms of biological role, non-catalytic component of the proteasome, a multicatalytic proteinase complex which is characterized by its ability to cleave peptides with Arg, Phe, Tyr, Leu, and Glu adjacent to the leaving group at neutral or slightly basic pH. The proteasome has an ATP-dependent proteolytic activity. This is Proteasome subunit beta type-3-A (PBC1) from Arabidopsis thaliana (Mouse-ear cress).